The primary structure comprises 130 residues: Small ribosomal subunit protein uS8 (130 aa).

This sequence belongs to the universal ribosomal protein uS8 family. As to quaternary structure, part of the 30S ribosomal subunit.

Its function is as follows. One of the primary rRNA binding proteins, it binds directly to 16S rRNA central domain where it helps coordinate assembly of the platform of the 30S subunit. This Methanotorris igneus (Methanococcus igneus) protein is Small ribosomal subunit protein uS8.